The sequence spans 517 residues: Protein ERGIC-53 (517 aa).

Residues 1–30 (MAVSRRRGPQAGAQSFFCALLLSFSQFVGS) form the signal peptide. The Lumenal portion of the chain corresponds to 31–484 (DGMGGDAAAP…DLPAFPSCLS (454 aa)). One can recognise an L-type lectin-like domain in the interval 52-275 (RRFEYKYSFK…DVLSFLTFQL (224 aa)). Positions 96 and 129 each coordinate a carbohydrate. Positions 160, 162, 163, 164, 165, 169, and 170 each coordinate Ca(2+). N164 is a binding site for a carbohydrate. Residue H186 participates in a carbohydrate binding. D189 is a binding site for Ca(2+). Cysteines 198 and 238 form a disulfide. 259–261 (GGL) is a binding site for a carbohydrate. Disordered regions lie at residues 276–297 (TEPG…KEKY) and 377–396 (EISR…SQQE). Basic and acidic residues predominate over residues 278–297 (PGKEPPTPEKDISEKEKEKY). Residue S433 is modified to Phosphoserine. The helical transmembrane segment at 485 to 505 (TVHFVIFIVVQTVLFIGYIMY) threads the bilayer. Topologically, residues 506–517 (RTQQEAAAKKFF) are cytoplasmic. Residues 506-517 (RTQQEAAAKKFF) form a mediates interaction with RAB3GAP1, RAB3GAP2 and UBXN6 region. The ER export motif signature appears at 516–517 (FF).

In terms of assembly, exists both as a covalent disulfide-linked homohexamer, and a complex of three disulfide-linked dimers non-covalently kept together. Interacts with MCFD2. May interact with TMEM115. Interacts with RAB3GAP1 and RAB3GAP2. Interacts with UBXN6. Interacts with SERPINA1/alpha1-antitrypsin. Interacts with BET1.

It localises to the endoplasmic reticulum-Golgi intermediate compartment membrane. The protein resides in the golgi apparatus membrane. The protein localises to the endoplasmic reticulum membrane. In terms of biological role, mannose-specific lectin. May recognize sugar residues of glycoproteins, glycolipids, or glycosylphosphatidyl inositol anchors and may be involved in the sorting or recycling of proteins, lipids, or both. The LMAN1-MCFD2 complex forms a specific cargo receptor for the ER-to-Golgi transport of selected proteins. In Rattus norvegicus (Rat), this protein is Protein ERGIC-53 (Lman1).